A 117-amino-acid chain; its full sequence is Large ribosomal subunit protein bL17 (117 aa).

This sequence belongs to the bacterial ribosomal protein bL17 family. As to quaternary structure, part of the 50S ribosomal subunit. Contacts protein L32.

The chain is Large ribosomal subunit protein bL17 from Endomicrobium trichonymphae.